Reading from the N-terminus, the 395-residue chain is Succinyl-diaminopimelate desuccinylase (395 aa).

Residue histidine 74 coordinates Zn(2+). Residue aspartate 76 is part of the active site. Aspartate 107 serves as a coordination point for Zn(2+). Residue glutamate 141 is the Proton acceptor of the active site. Residues glutamate 142, glutamate 170, and histidine 368 each coordinate Zn(2+).

The protein belongs to the peptidase M20A family. DapE subfamily. As to quaternary structure, homodimer. The cofactor is Zn(2+). Requires Co(2+) as cofactor.

The catalysed reaction is N-succinyl-(2S,6S)-2,6-diaminopimelate + H2O = (2S,6S)-2,6-diaminopimelate + succinate. It functions in the pathway amino-acid biosynthesis; L-lysine biosynthesis via DAP pathway; LL-2,6-diaminopimelate from (S)-tetrahydrodipicolinate (succinylase route): step 3/3. Functionally, catalyzes the hydrolysis of N-succinyl-L,L-diaminopimelic acid (SDAP), forming succinate and LL-2,6-diaminopimelate (DAP), an intermediate involved in the bacterial biosynthesis of lysine and meso-diaminopimelic acid, an essential component of bacterial cell walls. In Brucella anthropi (strain ATCC 49188 / DSM 6882 / CCUG 24695 / JCM 21032 / LMG 3331 / NBRC 15819 / NCTC 12168 / Alc 37) (Ochrobactrum anthropi), this protein is Succinyl-diaminopimelate desuccinylase.